An 805-amino-acid chain; its full sequence is Putative cation-transporting ATPase MJ1226 (805 aa).

A run of 4 helical transmembrane segments spans residues 53 to 73, 75 to 95, 226 to 246, and 258 to 278; these read SYFW…SAII, HWVD…VGFW, IGDY…AVEL, and FALV…LSIT. Residue Asp-311 is the 4-aspartylphosphate intermediate of the active site. 6 helical membrane-spanning segments follow: residues 615 to 637, 641 to 663, 680 to 700, 712 to 734, 747 to 769, and 773 to 790; these read YVIY…ILIL, PITA…AIAY, ILML…LIFY, ELQS…VTRI, LLFW…GIFM, and GWDL…WMLI.

It belongs to the cation transport ATPase (P-type) (TC 3.A.3) family. Type IIIA subfamily.

Its subcellular location is the cell membrane. It catalyses the reaction ATP + H2O = ADP + phosphate + H(+). The chain is Putative cation-transporting ATPase MJ1226 from Methanocaldococcus jannaschii (strain ATCC 43067 / DSM 2661 / JAL-1 / JCM 10045 / NBRC 100440) (Methanococcus jannaschii).